A 458-amino-acid polypeptide reads, in one-letter code: Cysteine--tRNA ligase (458 aa).

Residue Cys28 coordinates Zn(2+). Residues 30–40 (VTVYDLCHFGH) carry the 'HIGH' region motif. 3 residues coordinate Zn(2+): Cys209, His234, and Glu238. Residues 266 to 270 (KMSKS) carry the 'KMSKS' region motif. Lys269 is a binding site for ATP.

The protein belongs to the class-I aminoacyl-tRNA synthetase family. In terms of assembly, monomer. Zn(2+) serves as cofactor.

Its subcellular location is the cytoplasm. The enzyme catalyses tRNA(Cys) + L-cysteine + ATP = L-cysteinyl-tRNA(Cys) + AMP + diphosphate. The protein is Cysteine--tRNA ligase of Mannheimia succiniciproducens (strain KCTC 0769BP / MBEL55E).